Here is a 186-residue protein sequence, read N- to C-terminus: Probable RNA 2'-phosphotransferase (186 aa).

This sequence belongs to the KptA/TPT1 family.

Its function is as follows. Removes the 2'-phosphate from RNA via an intermediate in which the phosphate is ADP-ribosylated by NAD followed by a presumed transesterification to release the RNA and generate ADP-ribose 1''-2''-cyclic phosphate (APPR&gt;P). May function as an ADP-ribosylase. The sequence is that of Probable RNA 2'-phosphotransferase from Hahella chejuensis (strain KCTC 2396).